The sequence spans 252 residues: tRNA (guanine-N(1)-)-methyltransferase (252 aa).

Residues G118 and 138–143 (IGDYVL) each bind S-adenosyl-L-methionine.

Belongs to the RNA methyltransferase TrmD family. In terms of assembly, homodimer.

The protein resides in the cytoplasm. The enzyme catalyses guanosine(37) in tRNA + S-adenosyl-L-methionine = N(1)-methylguanosine(37) in tRNA + S-adenosyl-L-homocysteine + H(+). Specifically methylates guanosine-37 in various tRNAs. The polypeptide is tRNA (guanine-N(1)-)-methyltransferase (Pseudomonas paraeruginosa (strain DSM 24068 / PA7) (Pseudomonas aeruginosa (strain PA7))).